A 458-amino-acid polypeptide reads, in one-letter code: F-box/WD repeat-containing protein 9 (458 aa).

An N-acetylmethionine modification is found at Met1. Disordered regions lie at residues 1–30 (MELPLGRCDDSRTWDDDSDPESETDPDAQA) and 42–64 (KSGLAFSRPSQLSTPAASPSASE). A compositionally biased stretch (acidic residues) spans 16 to 26 (DDSDPESETDP). Ser18 carries the post-translational modification Phosphoserine. Phosphothreonine is present on Thr55. Ser59 bears the Phosphoserine mark. Residues 76-123 (EPGLLSLPPELLLEICSYLDARLVLHVLSRVCHALRDLVSDHVTWRLR) form the F-box domain. 7 WD repeats span residues 171–210 (GHVASVDSVLLLQGGSLCLSGSRDRNVNLWDLRQLGTESN), 220–261 (KRNS…QQFG), 264–301 (KASSAVLCLSYLPDILVTGTYDKKVTIYDPRAGPALLK), 305–342 (LHSRPVLTLLADDRHIISGSEDHTLVVVDRRANSVLQR), 344–381 (QLDSYLLCMSYQEPQLWAGDNQGLLHVFANRNGCFQLI), 387–424 (GHSFPITGIQYSVGALYTTSTDKTIRVHVPTDPPRTIC), and 427–458 (RHDNGLNRVCAEGNLVVAGSGDLSLEVWRLQA).

In terms of assembly, interacts with SKP1 and CUL1.

Substrate-recognition component of the SCF (SKP1-CUL1-F-box protein)-type E3 ubiquitin ligase complex. This is F-box/WD repeat-containing protein 9 (FBXW9) from Homo sapiens (Human).